The primary structure comprises 397 residues: Probable tRNA sulfurtransferase (397 aa).

Residues 60-165 (HPVIEKLQEV…KEGTYITAYD (106 aa)) form the THUMP domain. ATP-binding positions include 183 to 184 (ML), 208 to 209 (HF), R265, G287, and Q296.

This sequence belongs to the ThiI family.

It localises to the cytoplasm. The enzyme catalyses [ThiI sulfur-carrier protein]-S-sulfanyl-L-cysteine + a uridine in tRNA + 2 reduced [2Fe-2S]-[ferredoxin] + ATP + H(+) = [ThiI sulfur-carrier protein]-L-cysteine + a 4-thiouridine in tRNA + 2 oxidized [2Fe-2S]-[ferredoxin] + AMP + diphosphate. It catalyses the reaction [ThiS sulfur-carrier protein]-C-terminal Gly-Gly-AMP + S-sulfanyl-L-cysteinyl-[cysteine desulfurase] + AH2 = [ThiS sulfur-carrier protein]-C-terminal-Gly-aminoethanethioate + L-cysteinyl-[cysteine desulfurase] + A + AMP + 2 H(+). It functions in the pathway cofactor biosynthesis; thiamine diphosphate biosynthesis. Catalyzes the ATP-dependent transfer of a sulfur to tRNA to produce 4-thiouridine in position 8 of tRNAs, which functions as a near-UV photosensor. Also catalyzes the transfer of sulfur to the sulfur carrier protein ThiS, forming ThiS-thiocarboxylate. This is a step in the synthesis of thiazole, in the thiamine biosynthesis pathway. The sulfur is donated as persulfide by IscS. The sequence is that of Probable tRNA sulfurtransferase from Anoxybacillus flavithermus (strain DSM 21510 / WK1).